We begin with the raw amino-acid sequence, 527 residues long: Abrin-b (527 aa).

At Gln-1 the chain carries Pyrrolidone carboxylic acid. N-linked (GlcNAc...) asparagine glycosylation occurs at Asn-110. Residue Glu-163 is part of the active site. 3 cysteine pairs are disulfide-bonded: Cys-246–Cys-268, Cys-285–Cys-304, and Cys-328–Cys-345. In terms of domain architecture, Ricin B-type lectin 1 spans 272–399 (YEPTVRIGGR…YLMRQGWRTG (128 aa)). Residues 282–324 (NGMCVDVYDDGYHNGNRIIAWKCKDRLEENQLWTLKSDKTIRS) form a 1-alpha repeat. The stretch at 325–365 (NGKCLTTEGYAPGNYVMIYDCTSAVAEATYWEIWDNGTIIN) is one 1-beta repeat. N-linked (GlcNAc...) asparagine glycosylation is found at Asn-360 and Asn-400. Residues 368-400 (SALVLSAESSSMGGTLTVQTNEYLMRQGWRTGN) form a 1-gamma repeat. A Ricin B-type lectin 2 domain is found at 402-526 (TSPFVTSISG…GKPNQIWLTL (125 aa)). The stretch at 413–448 (SDLCMQAQGSNVWLAYCDNNKKEQQWALYTDGSIRS) is one 2-alpha repeat. 2 disulfide bridges follow: Cys-416–Cys-429 and Cys-455–Cys-472. Residues 452–491 (TNNCLTSKDHKQGSPIVLMACSNGWASQRWLFRNDGSIYN) form a 2-beta repeat. Residues 494-527 (DDMVMDVKRSDPSLKEIILHPYHGKPNQIWLTLF) form a 2-gamma repeat.

It in the N-terminal section; belongs to the ribosome-inactivating protein family. Type 2 RIP subfamily. In terms of assembly, disulfide-linked dimer of A and B chains.

It catalyses the reaction Endohydrolysis of the N-glycosidic bond at one specific adenosine on the 28S rRNA.. The A chain is responsible for inhibiting protein synthesis through the catalytic inactivation of 60S ribosomal subunits by removing adenine from position 4,324 of 28S rRNA. Abrin-a is more toxic than ricin. Its function is as follows. The B chain is a galactose-specific lectin that facilitates the binding of abrin to the cell membrane that precedes endocytosis. In Abrus precatorius (Indian licorice), this protein is Abrin-b.